We begin with the raw amino-acid sequence, 757 residues long: MDVNPTLLFLKVPAQNAISTTFPYTGDPPYSHGTGTGYTMDTVNRTHQYSEKGKWTTNTETGEPQLNPIDGPLPEDNEQSGYAQQDCVLEAMAFLEESHPGIFENSCLETMEVVQQTRVDRLTQGRQTYDWTLNRNQPAATALANTIEVFRSNGLTANESGRLIDFLKDVMESMDKEEMEITTHFQRKRRVRDNMTKKMVTQRTIGKKKQRVNKRSYLIRALTLNTMTKDAERGKLKRRAIATPGMQIRGFVYFVETLARSICEKLEQSGLPVGGNEKKAKLANVVRKMMTNSQDTELSFTITGDNTKWNENQNPRMFLAMMTYITKNQPEWFRNILSIAPIMFSNKMARLGKGYMFESKRMKLRTQIPAEMLASIDLKYFNESTRKKIEKIRPLLRDGTASLSPGMMMGMFNMLSTVLGVSILNLGQKKYTKTTYWWDGLQSSDDFALIVNAPNHEGIQAGVDRFYRTCKLVGINMSKKKSYINRTGTFEFTSFFYRYGFVANFSMELPSFGVSGINESADMSIGVTVIKNNMINNDLGPATAQMALQLFIKDYRYTYRCHRGHTQIQTRRSFELKKLWEQTRSKAGLFVSDGGPNLYNIRNLHIPEVCLKWELMDEDYQGRLCNPLNPFVSHKEIESVNNAVVMPAHGPAKSMEYDAVATTHSWIPKRNRSILNTSQRGILEDGQMYQKCCNLFEKFFPSSSYRRPVGISSMVEAMVSRARIDARIDFEAGRIKKEEFSEIMKICSTIEELRRQK.

Residues S50–Q79 are disordered. Over residues W55–P64 the composition is skewed to polar residues. 2 consecutive short sequence motifs (nuclear localization signal) follow at residues R187 to M195 and R203 to S216. A promoter-binding site region spans residues R249–E256. In terms of domain architecture, RdRp catalytic spans V286 to Y483.

The protein belongs to the influenza viruses polymerase PB1 family. As to quaternary structure, influenza RNA polymerase is composed of three subunits: PB1, PB2 and PA. Interacts (via N-terminus) with PA (via C-terminus). Interacts (via C-terminus) with PB2 (via N-terminus); this interaction is essential for transcription initiation. Post-translationally, phosphorylated by host PRKCA.

It localises to the host nucleus. The protein resides in the host cytoplasm. It catalyses the reaction RNA(n) + a ribonucleoside 5'-triphosphate = RNA(n+1) + diphosphate. In terms of biological role, RNA-dependent RNA polymerase which is responsible for replication and transcription of virus RNA segments. The transcription of viral mRNAs occurs by a unique mechanism called cap-snatching. 5' methylated caps of cellular mRNAs are cleaved after 10-13 nucleotides by PA. In turn, these short capped RNAs are used as primers by PB1 for transcription of viral mRNAs. During virus replication, PB1 initiates RNA synthesis and copy vRNA into complementary RNA (cRNA) which in turn serves as a template for the production of more vRNAs. In Influenza A virus (strain A/Dunedin/4/1973 H3N2), this protein is RNA-directed RNA polymerase catalytic subunit.